Reading from the N-terminus, the 240-residue chain is NKG2-E type II integral membrane protein (240 aa).

Residues 1 to 12 (MSKQRGTFSEVS) show a composition bias toward polar residues. The disordered stretch occupies residues 1–31 (MSKQRGTFSEVSLAQDPKWQQRKPKGNKSSI). Residues 1–70 (MSKQRGTFSE…CQGLLPPPEK (70 aa)) are Cytoplasmic-facing. The helical; Signal-anchor for type II membrane protein transmembrane segment at 71–93 (LTAEVLGIICIVLMATVLKTIVL) threads the bilayer. The Extracellular segment spans residues 94–240 (IPFLEQNNSS…IMLTRLVLNS (147 aa)). Asn100 is a glycosylation site (N-linked (GlcNAc...) asparagine). In terms of domain architecture, C-type lectin spans 116–230 (HCPEEWITYS…GSSRIIRRGF (115 aa)). A disulfide bond links Cys117 and Cys128. Residues Asn149 and Asn179 are each glycosylated (N-linked (GlcNAc...) asparagine). An intrachain disulfide couples Cys207 to Cys220.

Can form disulfide-bonded heterodimer with CD94. In terms of tissue distribution, natural killer cells.

The protein localises to the membrane. In terms of biological role, plays a role as a receptor for the recognition of MHC class I HLA-E molecules by NK cells and some cytotoxic T-cells. This Homo sapiens (Human) protein is NKG2-E type II integral membrane protein (KLRC3).